We begin with the raw amino-acid sequence, 88 residues long: uncharacterized protein (88 aa).

The next 3 helical transmembrane spans lie at 3–23 (VFIL…CSVA), 33–53 (VAPG…AFTA), and 61–81 (FIGG…PFFF).

It is found in the cell membrane. This is an uncharacterized protein from Bacillus subtilis (strain 168).